A 167-amino-acid chain; its full sequence is UPF0114 protein in repA1-repA2 intergenic region (167 aa).

The next 3 helical transmembrane spans lie at 15 to 35 (LMFP…LKFF), 53 to 73 (LVLA…LVMV), and 136 to 156 (IMLC…MAYI).

The protein belongs to the UPF0114 family.

The protein localises to the cell membrane. This Buchnera aphidicola subsp. Schizaphis graminum (strain Sg) protein is UPF0114 protein in repA1-repA2 intergenic region.